Reading from the N-terminus, the 66-residue chain is Photosystem II reaction center protein J (66 aa).

A helical membrane pass occupies residues 36 to 56 (LWLVATAGGIAVIFVLGIFFY).

Belongs to the PsbJ family. As to quaternary structure, PSII is composed of 1 copy each of membrane proteins PsbA, PsbB, PsbC, PsbD, PsbE, PsbF, PsbH, PsbI, PsbJ, PsbK, PsbL, PsbM, PsbT, PsbX, PsbY, Psb30/Ycf12, peripheral proteins PsbO, CyanoQ (PsbQ), PsbU, PsbV and a large number of cofactors. It forms dimeric complexes.

The protein localises to the cellular thylakoid membrane. Its function is as follows. One of the components of the core complex of photosystem II (PSII). PSII is a light-driven water:plastoquinone oxidoreductase that uses light energy to abstract electrons from H(2)O, generating O(2) and a proton gradient subsequently used for ATP formation. It consists of a core antenna complex that captures photons, and an electron transfer chain that converts photonic excitation into a charge separation. The sequence is that of Photosystem II reaction center protein J from Prochlorococcus marinus (strain MIT 9215).